An 89-amino-acid chain; its full sequence is Small ribosomal subunit protein uS15 (89 aa).

This sequence belongs to the universal ribosomal protein uS15 family. Part of the 30S ribosomal subunit. Forms a bridge to the 50S subunit in the 70S ribosome, contacting the 23S rRNA.

One of the primary rRNA binding proteins, it binds directly to 16S rRNA where it helps nucleate assembly of the platform of the 30S subunit by binding and bridging several RNA helices of the 16S rRNA. In terms of biological role, forms an intersubunit bridge (bridge B4) with the 23S rRNA of the 50S subunit in the ribosome. The protein is Small ribosomal subunit protein uS15 of Trichodesmium erythraeum (strain IMS101).